The sequence spans 279 residues: 2-dehydro-3-deoxyphosphooctonate aldolase (279 aa).

This sequence belongs to the KdsA family.

It is found in the cytoplasm. The enzyme catalyses D-arabinose 5-phosphate + phosphoenolpyruvate + H2O = 3-deoxy-alpha-D-manno-2-octulosonate-8-phosphate + phosphate. It participates in carbohydrate biosynthesis; 3-deoxy-D-manno-octulosonate biosynthesis; 3-deoxy-D-manno-octulosonate from D-ribulose 5-phosphate: step 2/3. The protein operates within bacterial outer membrane biogenesis; lipopolysaccharide biosynthesis. In Bartonella henselae (strain ATCC 49882 / DSM 28221 / CCUG 30454 / Houston 1) (Rochalimaea henselae), this protein is 2-dehydro-3-deoxyphosphooctonate aldolase.